The primary structure comprises 228 residues: Chaperone protein FanE (228 aa).

Residues 1-19 (MNKFISIIALCVFSSYANA) form the signal peptide. C157 and C198 are disulfide-bonded.

Belongs to the periplasmic pilus chaperone family.

Its subcellular location is the periplasm. Functionally, mediates assembly of pili by forming soluble multimeric complexes with pili subunits as an intermediate step in the assembly process. This protein is involved in K99 pili assembly. The polypeptide is Chaperone protein FanE (fanE) (Escherichia coli).